The sequence spans 161 residues: Lipoprotein signal peptidase (161 aa).

Transmembrane regions (helical) follow at residues 8-28 (LKYF…KYLA), 40-60 (ITSF…SLLS), 67-87 (QMIM…YLII), and 91-111 (ITEK…LGNF). Residues aspartate 122 and aspartate 140 contribute to the active site. Residues 136-156 (FNIADSAITCGVVILIAASLF) form a helical membrane-spanning segment.

The protein belongs to the peptidase A8 family.

It is found in the cell inner membrane. It catalyses the reaction Release of signal peptides from bacterial membrane prolipoproteins. Hydrolyzes -Xaa-Yaa-Zaa-|-(S,diacylglyceryl)Cys-, in which Xaa is hydrophobic (preferably Leu), and Yaa (Ala or Ser) and Zaa (Gly or Ala) have small, neutral side chains.. The protein operates within protein modification; lipoprotein biosynthesis (signal peptide cleavage). In terms of biological role, this protein specifically catalyzes the removal of signal peptides from prolipoproteins. The protein is Lipoprotein signal peptidase of Francisella tularensis subsp. novicida (strain U112).